A 152-amino-acid chain; its full sequence is SsrA-binding protein (152 aa).

This sequence belongs to the SmpB family.

It is found in the cytoplasm. In terms of biological role, required for rescue of stalled ribosomes mediated by trans-translation. Binds to transfer-messenger RNA (tmRNA), required for stable association of tmRNA with ribosomes. tmRNA and SmpB together mimic tRNA shape, replacing the anticodon stem-loop with SmpB. tmRNA is encoded by the ssrA gene; the 2 termini fold to resemble tRNA(Ala) and it encodes a 'tag peptide', a short internal open reading frame. During trans-translation Ala-aminoacylated tmRNA acts like a tRNA, entering the A-site of stalled ribosomes, displacing the stalled mRNA. The ribosome then switches to translate the ORF on the tmRNA; the nascent peptide is terminated with the 'tag peptide' encoded by the tmRNA and targeted for degradation. The ribosome is freed to recommence translation, which seems to be the essential function of trans-translation. In Helicobacter pylori (strain J99 / ATCC 700824) (Campylobacter pylori J99), this protein is SsrA-binding protein.